The chain runs to 472 residues: Carboxypeptidase E (472 aa).

A signal peptide spans 1-21 (MLHAMRPVLLVAALLAVTAHA). The Peptidase M14 domain occupies 39-359 (HYHNQAQLEA…KSIFEYVWKS (321 aa)). Residues His101 and Glu104 each coordinate Zn(2+). N-linked (GlcNAc...) asparagine glycosylation is present at Asn134. His232 provides a ligand contact to Zn(2+). Glu329 (proton donor/acceptor) is an active-site residue. 2 N-linked (GlcNAc...) asparagine glycosylation sites follow: Asn385 and Asn428.

This sequence belongs to the peptidase M14 family. It depends on Zn(2+) as a cofactor. Expression is restricted to the nervous system.

It localises to the cell projection. Its subcellular location is the axon. The protein resides in the perikaryon. The protein localises to the cytoplasmic vesicle. It is found in the secretory vesicle lumen. The enzyme catalyses Release of C-terminal arginine or lysine residues from polypeptides.. In terms of biological role, during FMRFamide-like peptide (FaRPs or FLP) and neuropeptide-like protein (NLP) precursor processing, catalyzes the removal of Arg or Lys residues from the C-terminus following the initial endoprotease cleavage. By processing neuropeptides, modulates basal acetylcholine release at the ventral cord neuromuscular junctions. Involved in egg-laying, defecation and locomotion. By processing FLP neuropeptides, regulates the turning step of male mating behavior. Involved in reducing pharyngeal pumping in response to high CO(2) levels. The protein is Carboxypeptidase E of Caenorhabditis elegans.